Reading from the N-terminus, the 71-residue chain is Putative antitoxin VapB14 (71 aa).

Putative antitoxin component of a possible type II toxin-antitoxin (TA) system. The cognate toxin is VapB14. The protein is Putative antitoxin VapB14 (vapB14) of Mycobacterium tuberculosis (strain ATCC 25618 / H37Rv).